A 201-amino-acid chain; its full sequence is Glycerol-3-phosphate acyltransferase (201 aa).

Transmembrane regions (helical) follow at residues 9-29, 60-80, 86-106, 116-136, and 153-173; these read LTLIGALVFGYFLGSIPFGLI, LAAATLIFDMLKGTVAVLVAS, AAIGAGFGAFIGHLFPVWIGF, LGVLIGLAWPGALVFAAVWIV, and IVVPIALYSRGYPAIAVLFAI.

Belongs to the PlsY family. Probably interacts with PlsX.

The protein localises to the cell inner membrane. The catalysed reaction is an acyl phosphate + sn-glycerol 3-phosphate = a 1-acyl-sn-glycero-3-phosphate + phosphate. The protein operates within lipid metabolism; phospholipid metabolism. In terms of biological role, catalyzes the transfer of an acyl group from acyl-phosphate (acyl-PO(4)) to glycerol-3-phosphate (G3P) to form lysophosphatidic acid (LPA). This enzyme utilizes acyl-phosphate as fatty acyl donor, but not acyl-CoA or acyl-ACP. This chain is Glycerol-3-phosphate acyltransferase, found in Brucella anthropi (strain ATCC 49188 / DSM 6882 / CCUG 24695 / JCM 21032 / LMG 3331 / NBRC 15819 / NCTC 12168 / Alc 37) (Ochrobactrum anthropi).